We begin with the raw amino-acid sequence, 384 residues long: tRNA-specific 2-thiouridylase MnmA (384 aa).

Residues 1 to 26 form a disordered region; it reads MDEGIRASGGIRACQTGKQKQGRKRP. ATP-binding positions include 36 to 43 and methionine 62; that span reads GMSGGVDS. An interaction with target base in tRNA region spans residues 122–124; sequence NPD. The active-site Nucleophile is the cysteine 127. A disulfide bridge links cysteine 127 with cysteine 223. Residue glycine 151 participates in ATP binding. Residues 173 to 175 form an interaction with tRNA region; that stretch reads KDQ. The active-site Cysteine persulfide intermediate is the cysteine 223. Positions 334–335 are interaction with tRNA; that stretch reads RY.

This sequence belongs to the MnmA/TRMU family.

It is found in the cytoplasm. It catalyses the reaction S-sulfanyl-L-cysteinyl-[protein] + uridine(34) in tRNA + AH2 + ATP = 2-thiouridine(34) in tRNA + L-cysteinyl-[protein] + A + AMP + diphosphate + H(+). Catalyzes the 2-thiolation of uridine at the wobble position (U34) of tRNA, leading to the formation of s(2)U34. This Chromobacterium violaceum (strain ATCC 12472 / DSM 30191 / JCM 1249 / CCUG 213 / NBRC 12614 / NCIMB 9131 / NCTC 9757 / MK) protein is tRNA-specific 2-thiouridylase MnmA.